The chain runs to 1141 residues: Membrane-associated protein gex-3 (1141 aa).

This sequence belongs to the HEM-1/HEM-2 family. Interacts with aco-1, gei-13 and gex-2. Interacts with gex-3. As to expression, expressed in neurons.

The protein localises to the cytoplasm. Rac effector required for tissue morphogenesis, cell migrations and egg laying. May play a role in egg laying and in yolk protein clatherin-mediated endocytosis by oocytes during oogenesis. Plays a role in the formation of gap junctions between EA and EP endodermal precursor cells in embryos. In Caenorhabditis elegans, this protein is Membrane-associated protein gex-3.